Consider the following 371-residue polypeptide: Probable alcohol acetyltransferase (371 aa).

Catalysis depends on charge relay system residues S124 and H295. Positions 325 to 352 (AKALEESPKESYSRPPAHQQPLHKNDFT) are disordered. Residues 327 to 336 (ALEESPKESY) show a composition bias toward basic and acidic residues.

The protein belongs to the AB hydrolase superfamily.

Probable alcohol acetyltransferase that uses acetyl-CoA to synthesize acetate esters from various alcohols. Not involved in the synthesis of ethyl acetate. The polypeptide is Probable alcohol acetyltransferase (EAT2) (Cyberlindnera fabianii (Yeast)).